The chain runs to 247 residues: UPF0259 membrane protein BUsg_265 (247 aa).

6 helical membrane passes run 20–40 (IKIIIFISVLAAFISILINVL), 82–102 (IFKIFEFLISKTFLLGSIITL), 114–134 (IQFSLNSLCKFLPSLFILNFI), 137–157 (FFIQIGFMFFIFPGIFLSVLL), 188–208 (IVGTSVLFWMCVKFILTTVFS), and 217–237 (FIFLILNINMNIFFSILIVYL).

It belongs to the UPF0259 family.

It is found in the cell membrane. The sequence is that of UPF0259 membrane protein BUsg_265 from Buchnera aphidicola subsp. Schizaphis graminum (strain Sg).